The following is an 897-amino-acid chain: 3'-5' exonuclease DinG (897 aa).

The 154-residue stretch at 8–161 (VVDLETTGNQ…DEDAATTAKL (154 aa)) folds into the Exonuclease domain. The Helicase ATP-binding domain maps to 241–496 (SKAVDQLGLT…KAIDQLEKQR (256 aa)). 276–283 (ASLGSGKS) contributes to the ATP binding site. Positions 448 to 451 (DEAH) match the DEAH box motif. The Helicase C-terminal domain occupies 703–883 (NIDEYVASIV…NYRQKKGDIQ (181 aa)).

This sequence belongs to the helicase family. DinG subfamily. Type 2 sub-subfamily.

3'-5' exonuclease. The sequence is that of 3'-5' exonuclease DinG from Staphylococcus aureus (strain bovine RF122 / ET3-1).